The chain runs to 596 residues: Cis-3-hydroxy-L-proline dehydratase (596 aa).

Catalysis depends on serine 67, which acts as the Proton acceptor.

It belongs to the AcnX family. In terms of assembly, monomer. Fe(3+) serves as cofactor.

It catalyses the reaction cis-3-hydroxy-L-proline = 1-pyrroline-2-carboxylate + H2O. Its activity is regulated as follows. Inhibited by Zn(2+). Not inhibited by pyrrole-2-carboxylate nor its derivative 2-thiophenecarboxylate. Catalyzes the dehydration of cis-3-hydroxy-L-proline (c3LHyp) to Delta(1)-pyrroline-2-carboxylate (Pyr2C). No activity with L-proline, trans-4-hydroxy-L-proline (t4LHyp), cis-4-hydroxy-L-proline (c4LHyp), trans-3-hydroxy-L-proline (t3LHyp), D-proline, cis-4-hydroxy-D-proline (c4DHyp), trans-4-hydroxy-D-proline (t4DHyp) or L-serine as substrates. Because of the low catalytic efficiency, C3LHyp is likely not a main physiological substrate of this enzyme in H.jecorina. In Hypocrea jecorina (strain QM6a) (Trichoderma reesei), this protein is Cis-3-hydroxy-L-proline dehydratase.